The chain runs to 406 residues: Autotransporter heptosyltransferase TibC (406 aa).

Residues Thr107, Leu108, and Gly109 each contribute to the ADP-D-glycero-beta-D-manno-heptose site. Asp110 serves as the catalytic Proton acceptor. Positions 224, 226, 230, 257, 281, 302, and 326 each coordinate ADP-D-glycero-beta-D-manno-heptose. Residues Cys339, Cys342, Cys358, and Cys370 each coordinate Fe(3+).

Belongs to the glycosyltransferase 9 family. In terms of assembly, homododecamer composed of 6 homodimers forming a ring. The cofactor is Fe(3+).

It catalyses the reaction ADP-D-glycero-beta-D-manno-heptose + L-seryl-[protein] = O-(D-glycero-alpha-D-manno-heptosyl)-L-seryl-[protein] + ADP + H(+). In terms of biological role, glycosylates adhesin TibA. Specifically adds anomer D-glycero-beta-D-manno-heptose. Cannot use ADP-L-glycero-beta-D-manno-heptose as a sugar donor. The chain is Autotransporter heptosyltransferase TibC from Escherichia coli O78:H11 (strain H10407 / ETEC).